The following is a 184-amino-acid chain: (2E)-enoyl-[ACP] glycyltransferase (184 aa).

Belongs to the FcoT family.

The enzyme catalyses a (3R)-3-[(carboxymethyl)amino]fatty acid + holo-[ACP] + H(+) = a (2E)-enoyl-[ACP] + glycine + H2O. It carries out the reaction (3R)-3-[(carboxylmethyl)amino]decanoate + holo-[ACP] + H(+) = (2E)-decenoyl-[ACP] + glycine + H2O. Involved in the biosynthesis of a unique class of isonitrile lipopeptides (INLPs) that seem to play a role in metal acquisition in M.marinum. Catalyzes a Michael addition of glycine to the beta-position of an alpha,beta-unsaturated fatty acyl-[ACP], producing a (3R)-3-[(carboxymethyl)amino]fatty acid. Acts on the (2E)-decenoyl moiety loaded on the acyl-carrier protein MmaB, forming the product (3R)-3-[(carboxymethyl)amino]decanoate released from MmaB. The sequence is that of (2E)-enoyl-[ACP] glycyltransferase from Mycobacterium marinum (strain ATCC BAA-535 / M).